Here is a 251-residue protein sequence, read N- to C-terminus: MEDDAWLDLVGISADPPNRRNKCEKCKRPVVVCWCPALPHPPEAVSSQIVILQHPAEEKRSLRTALMLQLGLEPGKCVVYKGKRFPNHRNHADLQRILDSPQTLLLYPSRDSVPLEEVDHSAGPYTLVLIDGTWPQAKAIYASSPALHRLRQVKLIAVGISDYIIRTQPTEGCLSTLETAAQCLAVLESRPELRQTLVRPLHTLCKYQLDNGAVEHQSKEFLLKNNQYPKPIGKRLSRLLRNTACDGNEET.

Zn(2+)-binding residues include C23, C26, C33, and C35. A DXTW motif is present at residues 131 to 134 (DGTW).

It belongs to the TDD superfamily. DTWD2 family.

It catalyses the reaction a uridine in tRNA + S-adenosyl-L-methionine = a 3-[(3S)-3-amino-3-carboxypropyl]uridine in tRNA + S-methyl-5'-thioadenosine + H(+). Its function is as follows. Catalyzes the formation of 3-(3-amino-3-carboxypropyl)uridine (acp3U) at position 20a in the D-loop of several cytoplasmic tRNAs (acp3U(20a)). The protein is tRNA-uridine aminocarboxypropyltransferase 2 of Drosophila melanogaster (Fruit fly).